Here is a 294-residue protein sequence, read N- to C-terminus: MKNLENKSFIIRCLKAAASPSGVCRYGNTFSWLQLSFLFLFLTACLMAPLAVSFVKMDRFSVSSFMPSAIQGVNDQFADQLQGFQIRNGKLTGGKSSERIEDGQNVMAVDMKHEYETSGENGRLKVTGFENAIIFQPDQLVITDQNETGFSVGYAKMDVKLEKPNVHDVEVLIDTLWLAQYKPMIMMLAYTVVSMIQLLLTFVLAGGLWITKISNMVSIASFKEAASIAICASALPAFAAAAIGMVHFDLITVLMIHSCGVTLMISFAFRYLTKTRRDNGNLHSGGNDDKSAVI.

The next 4 helical transmembrane spans lie at 35–55 (LSFLFLFLTACLMAPLAVSFV), 184–204 (MIMMLAYTVVSMIQLLLTFVL), 228–248 (IAICASALPAFAAAAIGMVHF), and 249–269 (DLITVLMIHSCGVTLMISFAF).

It is found in the cell membrane. In terms of biological role, could have a role in maltodextrin utilization. The sequence is that of Putative maltodextrin utilization protein YvdJ (yvdJ) from Bacillus subtilis (strain 168).